We begin with the raw amino-acid sequence, 48 residues long: uncharacterized protein (48 aa).

Residues 1–20 form a disordered region; that stretch reads MLLKNWPSRRIQRDKSKRAG.

This is an uncharacterized protein from Bacillus subtilis (strain 168).